Consider the following 457-residue polypeptide: Cyanidin 3-O-galactoside 2''-O-xylosyltransferase FGGT1 (457 aa).

This sequence belongs to the UDP-glycosyltransferase family. In terms of tissue distribution, expressed in ovaries.

The enzyme catalyses cyanidin 3-O-beta-D-galactoside + UDP-alpha-D-xylose = cyanidin 3-O-[beta-D-xylosyl-(1-&gt;2)-beta-D-galactoside] + UDP + H(+). It functions in the pathway pigment biosynthesis; anthocyanin biosynthesis. Xylosyltransferase involved in anthocyanin biosynthesis by catalyzing the xylosylation of cyanidin 3-O-galactoside to form cyanidin 3-O-[2-O-(-xylosyl)-galactoside]. Required for the accumulation of anthocyanin in red-fleshed kiwifruit varieties. This chain is Cyanidin 3-O-galactoside 2''-O-xylosyltransferase FGGT1, found in Actinidia chinensis var. chinensis (Chinese soft-hair kiwi).